A 198-amino-acid polypeptide reads, in one-letter code: FMN-dependent NADH:quinone oxidoreductase (198 aa).

FMN is bound by residues Ser-10, 16–18 (SQS), 94–97 (MYNF), and 138–141 (TRGG).

The protein belongs to the azoreductase type 1 family. In terms of assembly, homodimer. It depends on FMN as a cofactor.

It catalyses the reaction 2 a quinone + NADH + H(+) = 2 a 1,4-benzosemiquinone + NAD(+). The enzyme catalyses N,N-dimethyl-1,4-phenylenediamine + anthranilate + 2 NAD(+) = 2-(4-dimethylaminophenyl)diazenylbenzoate + 2 NADH + 2 H(+). Functionally, quinone reductase that provides resistance to thiol-specific stress caused by electrophilic quinones. Its function is as follows. Also exhibits azoreductase activity. Catalyzes the reductive cleavage of the azo bond in aromatic azo compounds to the corresponding amines. This chain is FMN-dependent NADH:quinone oxidoreductase, found in Shewanella baltica (strain OS185).